The primary structure comprises 612 residues: Sulfite reductase [NADPH] flavoprotein alpha-component (612 aa).

Residues 64–202 (VTLISASQTG…QAQQWRQQVV (139 aa)) form the Flavodoxin-like domain. Residues 70–75 (SQTGNA), 117–120 (STQG), and 153–162 (LGDTSYEHFC) each bind FMN. In terms of domain architecture, FAD-binding FR-type spans 247–461 (TAPLTAQLSV…IEHNDNFRLP (215 aa)). FAD-binding positions include Thr-335, Lys-369, 399-402 (RLYS), 417-419 (TVG), Tyr-423, and 432-435 (GGAS). NADP(+) contacts are provided by residues 532–533 (SR), 538–542 (KIYVQ), and Asp-574. FAD is bound at residue Tyr-612.

Belongs to the NADPH-dependent sulphite reductase flavoprotein subunit CysJ family. This sequence in the N-terminal section; belongs to the flavodoxin family. The protein in the C-terminal section; belongs to the flavoprotein pyridine nucleotide cytochrome reductase family. As to quaternary structure, alpha(8)-beta(8). The alpha component is a flavoprotein, the beta component is a hemoprotein. It depends on FAD as a cofactor. FMN is required as a cofactor.

It carries out the reaction hydrogen sulfide + 3 NADP(+) + 3 H2O = sulfite + 3 NADPH + 4 H(+). It participates in sulfur metabolism; hydrogen sulfide biosynthesis; hydrogen sulfide from sulfite (NADPH route): step 1/1. Component of the sulfite reductase complex that catalyzes the 6-electron reduction of sulfite to sulfide. This is one of several activities required for the biosynthesis of L-cysteine from sulfate. The flavoprotein component catalyzes the electron flow from NADPH -&gt; FAD -&gt; FMN to the hemoprotein component. This chain is Sulfite reductase [NADPH] flavoprotein alpha-component, found in Yersinia pseudotuberculosis serotype O:1b (strain IP 31758).